A 37-amino-acid polypeptide reads, in one-letter code: Large ribosomal subunit protein bL36c (37 aa).

It belongs to the bacterial ribosomal protein bL36 family.

The protein resides in the plastid. Its subcellular location is the chloroplast. This is Large ribosomal subunit protein bL36c from Mesembryanthemum crystallinum (Common ice plant).